The primary structure comprises 395 residues: Flavohemoprotein (395 aa).

Residues 1–136 (MLDQQTIATI…LANVFIQRES (136 aa)) form the Globin domain. H85 serves as a coordination point for heme b. Residues Y95 and E135 each act as charge relay system in the active site. Residues 147 to 395 (GGWHGIRPFR…YECFGPHKVI (249 aa)) form a reductase region. Positions 150 to 255 (HGIRPFRIVA…AAPHGDFYLE (106 aa)) constitute an FAD-binding FR-type domain. FAD is bound by residues Y188 and 204–207 (RQYS). Residue 268–273 (GVGQTP) participates in NADP(+) binding. 388–391 (CFGP) serves as a coordination point for FAD.

This sequence belongs to the globin family. Two-domain flavohemoproteins subfamily. It in the C-terminal section; belongs to the flavoprotein pyridine nucleotide cytochrome reductase family. Requires heme b as cofactor. FAD is required as a cofactor.

It is found in the cytoplasm. It catalyses the reaction 2 nitric oxide + NADPH + 2 O2 = 2 nitrate + NADP(+) + H(+). The catalysed reaction is 2 nitric oxide + NADH + 2 O2 = 2 nitrate + NAD(+) + H(+). In terms of biological role, is involved in NO detoxification in an aerobic process, termed nitric oxide dioxygenase (NOD) reaction that utilizes O(2) and NAD(P)H to convert NO to nitrate, which protects the bacterium from various noxious nitrogen compounds. Therefore, plays a central role in the inducible response to nitrosative stress. In Dickeya dadantii (strain 3937) (Erwinia chrysanthemi (strain 3937)), this protein is Flavohemoprotein (hmp).